The following is a 111-amino-acid chain: Stress-response A/B barrel domain-containing protein At5g22580 (111 aa).

The Stress-response A/B barrel domain maps to F6–F98. V31, I34, D35, and V37 together coordinate Mg(2+).

As to quaternary structure, homodimer. Requires Mg(2+) as cofactor.

Functionally, involved in stress response. The polypeptide is Stress-response A/B barrel domain-containing protein At5g22580 (Arabidopsis thaliana (Mouse-ear cress)).